A 502-amino-acid polypeptide reads, in one-letter code: DEP domain-containing protein 7 (502 aa).

A DEP domain is found at Leu-37–Thr-127.

Belongs to the DEPDC7 family.

In Macaca fascicularis (Crab-eating macaque), this protein is DEP domain-containing protein 7 (DEPDC7).